An 85-amino-acid chain; its full sequence is Small ribosomal subunit protein bS16 (85 aa).

It belongs to the bacterial ribosomal protein bS16 family.

This chain is Small ribosomal subunit protein bS16, found in Neorickettsia sennetsu (strain ATCC VR-367 / Miyayama) (Ehrlichia sennetsu).